We begin with the raw amino-acid sequence, 878 residues long: Phosphoenolpyruvate carboxylase (878 aa).

Active-site residues include His138 and Lys545.

It belongs to the PEPCase type 1 family. It depends on Mg(2+) as a cofactor.

The enzyme catalyses oxaloacetate + phosphate = phosphoenolpyruvate + hydrogencarbonate. In terms of biological role, forms oxaloacetate, a four-carbon dicarboxylic acid source for the tricarboxylic acid cycle. This chain is Phosphoenolpyruvate carboxylase, found in Shewanella loihica (strain ATCC BAA-1088 / PV-4).